The sequence spans 330 residues: MKVLVIGGAGYIGSHAVRELVKEGNDVLVLDALYTGHRKAVDPKAKFYQGDIEDTFLVSKILRDEKIDAVMHFAAYSLVPESVKKPLKYYDNNVTGMISLLQAMNDANVKYLVFSSSAATYGIPKKLPITEDTPLNPINPYGETKMMMEKIMAWADKADGIKYTALRYFNVAGASSDGSIGEDHAPETHLIPNILKSAISGDGKFTIFGDDYDTKDGTNVRDYVQVEDLIDAHILALKHMMKTNKSDVFNLGTAHGYSNLEILESAKKVTGIDIPYTMGPRRGGDPDSLVADSTKARTVLGWKPKHENVDDVIATAWKWHKSHPKGYEDK.

NAD(+)-binding positions include 11 to 12 (YI), 31 to 36 (DALYTG), 51 to 52 (DI), 73 to 77 (FAAYS), N92, S117, Y141, K145, and F169. Residues S117 and Y141 each coordinate substrate. Y141 acts as the Proton acceptor in catalysis. Substrate-binding positions include N170, 189-190 (HL), 206-208 (TIF), R221, and 282-285 (RGGD).

It belongs to the NAD(P)-dependent epimerase/dehydratase family. In terms of assembly, homodimer. The cofactor is NAD(+).

It carries out the reaction UDP-alpha-D-glucose = UDP-alpha-D-galactose. It functions in the pathway carbohydrate metabolism; galactose metabolism. In terms of biological role, involved in the metabolism of galactose. Catalyzes the conversion of UDP-galactose (UDP-Gal) to UDP-glucose (UDP-Glc) through a mechanism involving the transient reduction of NAD. It also could be involved in preparation of carbohydrate residues for incorporation into complex polymers, such as exopolysaccharides. This chain is UDP-glucose 4-epimerase (galE), found in Lactobacillus helveticus (Lactobacillus suntoryeus).